Here is a 297-residue protein sequence, read N- to C-terminus: MVTTVQDLAEQLRQAVESSNEQMIAGLASAYSGKEREKVLRAYLSATGTTAADAIRKALKNGPTENLLAYLWDKPGDVRAKLIRNALSGKNDEAALIDLVIHCSSEDWYNTCTEYTTDYKRVLNDDLLSDIGTKEQWTKVFKHWILHKRSDRFDIDGDEKRLVTAIGKKDYDTIAEMLGTTSVSEYANIVRRAEVTLGKTIDQALSAVWSKQDLAVLLAAHYELLHPARLAFHLLKQALDGKKPDEARIIRITALTFDTCLAVKYAASEAGYDIGSAFAKALDKRLAPLIKILWRVM.

Annexin repeat units lie at residues T3–W72, K74–L146, F153–Y222, and H226–R295.

Belongs to the annexin family. Giardin subunit alpha subfamily.

The protein localises to the cytoplasm. Its subcellular location is the cytoskeleton. Giardins are involved in parasite attachment to the intestinal mucosa and in the cytoskeletal disassembly and reassembly that marks the transition from infectious trophozoite to transmissible cyst. They may interact with other cytoskeletal proteins such as microtubules in the microribbons or crossbridges, to maintain the integrity of the ventral disk. This is Giardin subunit alpha-6 from Giardia intestinalis (Giardia lamblia).